Consider the following 103-residue polypeptide: Sec-independent protein translocase protein TatA (103 aa).

The helical transmembrane segment at 1-21 threads the bilayer; the sequence is MGNIFSPTHLIVILLIIIVLF. Positions 77 to 103 are disordered; sequence KRATTRVKGSSSSRKGKTSVVKKQRVK. Positions 90-103 are enriched in basic residues; the sequence is RKGKTSVVKKQRVK.

The protein belongs to the TatA/E family. In terms of assembly, the Tat system comprises two distinct complexes: a TatABC complex, containing multiple copies of TatA, TatB and TatC subunits, and a separate TatA complex, containing only TatA subunits. Substrates initially bind to the TatABC complex, which probably triggers association of the separate TatA complex to form the active translocon.

Its subcellular location is the cell inner membrane. Its function is as follows. Part of the twin-arginine translocation (Tat) system that transports large folded proteins containing a characteristic twin-arginine motif in their signal peptide across membranes. TatA could form the protein-conducting channel of the Tat system. The protein is Sec-independent protein translocase protein TatA of Bartonella henselae (strain ATCC 49882 / DSM 28221 / CCUG 30454 / Houston 1) (Rochalimaea henselae).